The primary structure comprises 426 residues: 4-hydroxy-3-methylbut-2-en-1-yl diphosphate synthase (flavodoxin) (426 aa).

Residues Cys-320, Cys-323, Cys-366, and Glu-373 each contribute to the [4Fe-4S] cluster site.

This sequence belongs to the IspG family. Requires [4Fe-4S] cluster as cofactor.

The catalysed reaction is (2E)-4-hydroxy-3-methylbut-2-enyl diphosphate + oxidized [flavodoxin] + H2O + 2 H(+) = 2-C-methyl-D-erythritol 2,4-cyclic diphosphate + reduced [flavodoxin]. It functions in the pathway isoprenoid biosynthesis; isopentenyl diphosphate biosynthesis via DXP pathway; isopentenyl diphosphate from 1-deoxy-D-xylulose 5-phosphate: step 5/6. Converts 2C-methyl-D-erythritol 2,4-cyclodiphosphate (ME-2,4cPP) into 1-hydroxy-2-methyl-2-(E)-butenyl 4-diphosphate. This Wolbachia sp. subsp. Drosophila simulans (strain wRi) protein is 4-hydroxy-3-methylbut-2-en-1-yl diphosphate synthase (flavodoxin).